The chain runs to 486 residues: Glutamyl-tRNA(Gln) amidotransferase subunit A (486 aa).

Catalysis depends on charge relay system residues Lys77 and Ser152. The Acyl-ester intermediate role is filled by Ser176.

It belongs to the amidase family. GatA subfamily. Heterotrimer of A, B and C subunits.

It catalyses the reaction L-glutamyl-tRNA(Gln) + L-glutamine + ATP + H2O = L-glutaminyl-tRNA(Gln) + L-glutamate + ADP + phosphate + H(+). Functionally, allows the formation of correctly charged Gln-tRNA(Gln) through the transamidation of misacylated Glu-tRNA(Gln) in organisms which lack glutaminyl-tRNA synthetase. The reaction takes place in the presence of glutamine and ATP through an activated gamma-phospho-Glu-tRNA(Gln). In Lactococcus lactis subsp. cremoris (strain SK11), this protein is Glutamyl-tRNA(Gln) amidotransferase subunit A.